The following is a 173-amino-acid chain: MTVSFPPPSTSEPSREEQARALCLRLLTARSRTRAELAGQLAKRGYPEDVGDRVLDRLTAVGLVDDADFAADWVQSRRANAGKSRRALAAELQAKGVDQDVIGTALAGLDAGAERGRAEQLVRTKLRREKLTEDDARVTRRLVAMLARRGYSQTVACEVVIAELAAERDRRRV.

It belongs to the RecX family.

It is found in the cytoplasm. Its function is as follows. Modulates RecA activity. The sequence is that of Regulatory protein RecX from Mycobacterium marinum (strain ATCC BAA-535 / M).